A 188-amino-acid polypeptide reads, in one-letter code: Transcription factor FapR (188 aa).

It belongs to the FapR family.

Functionally, transcriptional factor involved in regulation of membrane lipid biosynthesis by repressing genes involved in fatty acid and phospholipid metabolism. The sequence is that of Transcription factor FapR from Bacillus licheniformis (strain ATCC 14580 / DSM 13 / JCM 2505 / CCUG 7422 / NBRC 12200 / NCIMB 9375 / NCTC 10341 / NRRL NRS-1264 / Gibson 46).